We begin with the raw amino-acid sequence, 128 residues long: Large ribosomal subunit protein uL24 (128 aa).

It belongs to the universal ribosomal protein uL24 family. As to quaternary structure, part of the 50S ribosomal subunit.

Its function is as follows. One of two assembly initiator proteins, it binds directly to the 5'-end of the 23S rRNA, where it nucleates assembly of the 50S subunit. Functionally, located at the polypeptide exit tunnel on the outside of the subunit. This chain is Large ribosomal subunit protein uL24, found in Pyrobaculum calidifontis (strain DSM 21063 / JCM 11548 / VA1).